The sequence spans 1168 residues: TBC1 domain family member 1 (1168 aa).

Ser146 bears the Phosphoserine mark. The disordered stretch occupies residues Val203–Gln238. Ser235 carries the post-translational modification Phosphoserine; by PKB/AKT1. At Ser237 the chain carries Phosphoserine. Positions Phe246–Gly404 constitute a PID domain. Ser503 carries the post-translational modification Phosphoserine. Residue Thr505 is modified to Phosphothreonine; by PKB/AKT1. A phosphoserine mark is found at Ser507, Ser525, and Ser527. Low complexity predominate over residues Ser532 to Ser542. 2 disordered regions span residues Ser532–Glu551 and Gly564–Gln587. Phosphoserine is present on residues Ser565, Ser566, Ser570, Ser571, and Ser585. Position 596 is a phosphothreonine (Thr596). Ser614 carries the post-translational modification Phosphoserine. Ser627 carries the post-translational modification Phosphoserine; by PKB/AKT1. Disordered regions lie at residues Val628–Arg658 and Ser678–Ser717. A compositionally biased stretch (basic and acidic residues) spans Thr632–His645. 2 positions are modified to phosphoserine: Ser695 and Ser941. Residues Gly800–Gly994 form the Rab-GAP TBC domain. Residue Tyr952 is modified to Phosphotyrosine. Thr1131 is subject to Phosphothreonine. Basic and acidic residues predominate over residues Glu1145 to Glu1159. Residues Glu1145 to Asp1168 are disordered.

In terms of assembly, interacts with APPL2 (via BAR domain); interaction is dependent of TBC1D1 phosphorylation at Ser-235; interaction diminishes the phosphorylation of TBC1D1 at Thr-596, resulting in inhibition of SLC2A4/GLUT4 translocation and glucose uptake. Insulin-stimulated phosphorylation by AKT family kinases stimulates SLC2A4/GLUT4 translocation.

It localises to the nucleus. May act as a GTPase-activating protein for Rab family protein(s). May play a role in the cell cycle and differentiation of various tissues. Involved in the trafficking and translocation of GLUT4-containing vesicles and insulin-stimulated glucose uptake into cells. The chain is TBC1 domain family member 1 (TBC1D1) from Homo sapiens (Human).